The following is a 214-amino-acid chain: Nigrelysin (214 aa).

The first 21 residues, Met-1–Ala-21, serve as a signal peptide directing secretion. A propeptide spanning residues Leu-22–Arg-35 is cleaved from the precursor. Residues Glu-38–Ala-47 are plays an important role in the hemolytic activity. Residues Gly-46 to Ser-65 are N-terminal region. Ser-89, Val-122, Ser-140, Pro-142, Tyr-168, Tyr-172, and Tyr-173 together coordinate phosphocholine. Residues Ser-140 to Lys-155 are trp-rich region, which is important for the binding to lipid membrane. The short motif at Lys-179–Asp-181 is the Cell attachment site, crucial for protein stability element.

The protein belongs to the actinoporin family. Sea anemone subfamily. As to quaternary structure, octamer or nonamer in membranes. Monomer in the soluble state.

It localises to the secreted. The protein localises to the nematocyst. Its subcellular location is the target cell membrane. Functionally, pore-forming protein that forms cation-selective hydrophilic pores in cell membranes and causes cytolysis. Pore formation is a multi-step process that involves specific recognition of membrane sphingomyelin (but neither cholesterol nor phosphatidylcholine) using aromatic rich region and adjacent phosphocholine (POC) binding site, firm binding to the membrane (mainly driven by hydrophobic interactions) accompanied by the transfer of the N-terminal region to the lipid-water interface and finally pore formation after oligomerization of monomers. This protein shows potent hemolytic activity (EC(50)=0.09 nM), as well as potent cytotoxic activity on nucleated cells (L1210 cells). The cytotoxic process starts with cellular swelling that is time and dose dependent and occurs up to a critical volume, probably due to influx of water via pores opened by this actinoporin. The second phase consists of the final loss of membrane integrity that leads to cytolysis. This Anthopleura nigrescens (Sea anemone) protein is Nigrelysin.